We begin with the raw amino-acid sequence, 453 residues long: UDP-N-acetylmuramoylalanine--D-glutamate ligase (453 aa).

117–123 (GTNGKTT) contributes to the ATP binding site.

The protein belongs to the MurCDEF family.

The protein localises to the cytoplasm. The enzyme catalyses UDP-N-acetyl-alpha-D-muramoyl-L-alanine + D-glutamate + ATP = UDP-N-acetyl-alpha-D-muramoyl-L-alanyl-D-glutamate + ADP + phosphate + H(+). It functions in the pathway cell wall biogenesis; peptidoglycan biosynthesis. Its function is as follows. Cell wall formation. Catalyzes the addition of glutamate to the nucleotide precursor UDP-N-acetylmuramoyl-L-alanine (UMA). This chain is UDP-N-acetylmuramoylalanine--D-glutamate ligase, found in Caldicellulosiruptor saccharolyticus (strain ATCC 43494 / DSM 8903 / Tp8T 6331).